The chain runs to 202 residues: Small ribosomal subunit protein uS4 (202 aa).

Residues methionine 1 to arginine 13 are compositionally biased toward basic residues. Residues methionine 1–arginine 42 are disordered. The S4 RNA-binding domain occupies asparagine 90–asparagine 152.

It belongs to the universal ribosomal protein uS4 family. In terms of assembly, part of the 30S ribosomal subunit. Contacts protein S5. The interaction surface between S4 and S5 is involved in control of translational fidelity.

In terms of biological role, one of the primary rRNA binding proteins, it binds directly to 16S rRNA where it nucleates assembly of the body of the 30S subunit. With S5 and S12 plays an important role in translational accuracy. The polypeptide is Small ribosomal subunit protein uS4 (Prochlorococcus marinus (strain AS9601)).